The primary structure comprises 403 residues: D-alanyl-D-alanine carboxypeptidase DacA (403 aa).

An N-terminal signal peptide occupies residues 1 to 29; the sequence is MNTIFSARIMKRLALTTALCTAFISAAHA. Residue Ser-73 is the Acyl-ester intermediate of the active site. Residue Lys-76 is the Proton acceptor of the active site. Ser-139 is an active-site residue. Lys-242 is a substrate binding site.

Belongs to the peptidase S11 family.

The protein localises to the cell inner membrane. It carries out the reaction Preferential cleavage: (Ac)2-L-Lys-D-Ala-|-D-Ala. Also transpeptidation of peptidyl-alanyl moieties that are N-acyl substituents of D-alanine.. Its pathway is cell wall biogenesis; peptidoglycan biosynthesis. In terms of biological role, removes C-terminal D-alanyl residues from sugar-peptide cell wall precursors. The protein is D-alanyl-D-alanine carboxypeptidase DacA (dacA) of Escherichia coli O157:H7.